The primary structure comprises 535 residues: Bifunctional purine biosynthesis protein PurH (535 aa).

Residues 6–151 (TRLPIRRALI…KNHKDVAIVV (146 aa)) enclose the MGS-like domain.

The protein belongs to the PurH family.

The enzyme catalyses (6R)-10-formyltetrahydrofolate + 5-amino-1-(5-phospho-beta-D-ribosyl)imidazole-4-carboxamide = 5-formamido-1-(5-phospho-D-ribosyl)imidazole-4-carboxamide + (6S)-5,6,7,8-tetrahydrofolate. It catalyses the reaction IMP + H2O = 5-formamido-1-(5-phospho-D-ribosyl)imidazole-4-carboxamide. The protein operates within purine metabolism; IMP biosynthesis via de novo pathway; 5-formamido-1-(5-phospho-D-ribosyl)imidazole-4-carboxamide from 5-amino-1-(5-phospho-D-ribosyl)imidazole-4-carboxamide (10-formyl THF route): step 1/1. It participates in purine metabolism; IMP biosynthesis via de novo pathway; IMP from 5-formamido-1-(5-phospho-D-ribosyl)imidazole-4-carboxamide: step 1/1. In Pseudomonas fluorescens (strain ATCC BAA-477 / NRRL B-23932 / Pf-5), this protein is Bifunctional purine biosynthesis protein PurH.